The sequence spans 466 residues: GTP cyclohydrolase 1 (466 aa).

Zn(2+) contacts are provided by Cys-342, His-345, and Cys-416.

The protein belongs to the GTP cyclohydrolase I family. As to quaternary structure, homodimer.

It carries out the reaction GTP + H2O = 7,8-dihydroneopterin 3'-triphosphate + formate + H(+). The protein operates within cofactor biosynthesis; 7,8-dihydroneopterin triphosphate biosynthesis; 7,8-dihydroneopterin triphosphate from GTP: step 1/1. GTP cyclohydrolase 1 is the first enzyme in the biosynthetic pathway leading to folic acid. The sequence is that of GTP cyclohydrolase 1 (GCH1) from Arabidopsis thaliana (Mouse-ear cress).